A 203-amino-acid chain; its full sequence is ATP-dependent dethiobiotin synthetase BioD (203 aa).

11–16 (NVGKTI) lines the ATP pocket. Thr-15 contacts Mg(2+). Residue Lys-31 is part of the active site. Residue Thr-35 coordinates substrate. ATP-binding positions include Asp-42 and 94–97 (EGAG). Asp-42 and Glu-94 together coordinate Mg(2+).

The protein belongs to the dethiobiotin synthetase family. Homodimer. It depends on Mg(2+) as a cofactor.

It is found in the cytoplasm. It carries out the reaction (7R,8S)-7,8-diammoniononanoate + CO2 + ATP = (4R,5S)-dethiobiotin + ADP + phosphate + 3 H(+). It functions in the pathway cofactor biosynthesis; biotin biosynthesis; biotin from 7,8-diaminononanoate: step 1/2. Catalyzes a mechanistically unusual reaction, the ATP-dependent insertion of CO2 between the N7 and N8 nitrogen atoms of 7,8-diaminopelargonic acid (DAPA, also called 7,8-diammoniononanoate) to form a ureido ring. In Lawsonia intracellularis (strain PHE/MN1-00), this protein is ATP-dependent dethiobiotin synthetase BioD.